Here is an 863-residue protein sequence, read N- to C-terminus: MIVTMKAMEKRNKKLWTLYLAMALITPCLSLRQLYATVYAGVPVWEDATPVLFCASDANLTSTEKHNIWASQACVPTDPTPYEYPLHNVTDDFNIWKNYMVEQMQEDIISLWDQSLKPCVQMTFLCVQMECTNIAGTTNENLMKKCEFNVTTVIKDKKEKKQALFYVSDLMELNETSSTNKTNSKMYTLTNCNSTTITQACPKVSFEPIPIHYCAPAGYAIFKCNSTEFNGTGTCRNITVVTCTHGIRPTVSTQLILNGTLSKGKIRMMAKDILEGGKNIIVTLNSTLNMTCERPQIDIQEMRIGPMAWYSMGIGGTAGNSSRAAYCKYNATDWGKILKQTAERYLELVNNTGSINMTFNHSSGGDLEVTHLHFNCHGEFFYCNTAKMFNYTFSCNGTTCSVSNVSQGNNGTLPCKLRQVVRSWIRGQSGLYAPPIKGNLTCMSNITGMILQMDNTWNSSNNNVTFRPIGGDMKDIWRTELFNYKVVRVKPFSVAPTRIARPVISTRTHREKRAVGLGMLFLGVLSAAGSTMGAAATTLAVQTHTLLKGIVQQQDNLLRAIQAQQQLLRLSXWGIRQLRARLLALETLLQNQQLLSLWGCKGKLVCYTSVKWNRTWIGNESIWDTLTWQEWDRQISNISSTIYEEIQKAQVQQEQNEKKLLELDEWASIWNWLDITKWLWYIKIAIIIVGALVGVRVIMIVLNIVKNIRQGYQPLSLQIPNHHQEEAGTPGRTGGGGGEEGRPRWIPSPQGFLPLLYTDLRTIILWTYHLLSNLASGIQKVISYLRLGLWILGQKIINVCRICAAVTQYWLQELQNSATSLLDTLAVAVANWTDGIIAGIQRIGTGIRNIPRRIRQGLERSLL.

A signal peptide spans Met-1 to Arg-32. Topologically, residues Gln-33–Ile-684 are extracellular. A disulfide bridge connects residues Cys-54 and Cys-74. Residues Asn-59 and Asn-88 are each glycosylated (N-linked (GlcNAc...) asparagine; by host). Intrachain disulfides connect Cys-119/Cys-201, Cys-126/Cys-192, Cys-131/Cys-146, Cys-214/Cys-243, and Cys-224/Cys-235. The interval Cys-131 to Lys-145 is V1. The interval Cys-146–Cys-192 is V2. Residues Asn-149, Asn-174, Asn-180, Asn-193, Asn-225, Asn-230, Asn-237, Asn-258, Asn-285, Asn-289, Asn-320, Asn-330, Asn-350, Asn-356, and Asn-360 are each glycosylated (N-linked (GlcNAc...) asparagine; by host). The segment at Cys-292–Tyr-326 is V3. A disulfide bridge connects residues Cys-292 and Cys-327. Residues Ser-362–Leu-372 are CD4-binding loop. Disulfide bonds link Cys-376-Cys-442 and Cys-383-Cys-415. The interval Cys-383–Cys-415 is V4. N-linked (GlcNAc...) asparagine; by host glycans are attached at residues Asn-390, Asn-396, Asn-404, Asn-410, Asn-439, Asn-445, Asn-458, and Asn-463. 2 V5 regions span residues Asn-458–Ile-469 and Ser-460–Ile-469. The fusion peptide stretch occupies residues Ala-514–Ala-534. An immunosuppression region spans residues Arg-576–Leu-594. The cysteines at positions 600 and 606 are disulfide-linked. Asn-613, Asn-619, and Asn-637 each carry an N-linked (GlcNAc...) asparagine; by host glycan. The stretch at Arg-633–Ala-667 forms a coiled coil. The interval Glu-662–Lys-683 is MPER; binding to GalCer. The chain crosses the membrane as a helical span at residues Ala-685–Val-705. Residues Lys-706–Leu-863 lie on the Cytoplasmic side of the membrane. The short motif at Tyr-712–Leu-715 is the YXXL motif; contains endocytosis signal element. The Di-leucine internalization motif signature appears at Leu-862 to Leu-863.

The protein belongs to the HIV-1 env protein family. The mature envelope protein (Env) consists of a homotrimer of non-covalently associated gp120-gp41 heterodimers. The resulting complex protrudes from the virus surface as a spike. There seems to be as few as 10 spikes on the average virion. Interacts with host CD4, CCR5 and CXCR4. Gp120 also interacts with the C-type lectins CD209/DC-SIGN and CLEC4M/DC-SIGNR (collectively referred to as DC-SIGN(R)). Gp120 and gp41 interact with GalCer. Gp120 interacts with host ITGA4/ITGB7 complex; on CD4+ T-cells, this interaction results in rapid activation of integrin ITGAL/LFA-1, which facilitates efficient cell-to-cell spreading of HIV-1. Gp120 interacts with cell-associated heparan sulfate; this interaction increases virus infectivity on permissive cells and may be involved in infection of CD4- cells. As to quaternary structure, the mature envelope protein (Env) consists of a homotrimer of non-covalently associated gp120-gp41 heterodimers. The resulting complex protrudes from the virus surface as a spike. There seems to be as few as 10 spikes on the average virion. Post-translationally, highly glycosylated by host. The high number of glycan on the protein is reffered to as 'glycan shield' because it contributes to hide protein sequence from adaptive immune system. In terms of processing, palmitoylation of the transmembrane protein and of Env polyprotein (prior to its proteolytic cleavage) is essential for their association with host cell membrane lipid rafts. Palmitoylation is therefore required for envelope trafficking to classical lipid rafts, but not for viral replication. Specific enzymatic cleavages in vivo yield mature proteins. Envelope glycoproteins are synthesized as an inactive precursor that is heavily N-glycosylated and processed likely by host cell furin in the Golgi to yield the mature SU and TM proteins. The cleavage site between SU and TM requires the minimal sequence [KR]-X-[KR]-R. About 2 of the 9 disulfide bonds of gp41 are reduced by P4HB/PDI, following binding to CD4 receptor.

It localises to the virion membrane. Its subcellular location is the host cell membrane. The protein localises to the host endosome membrane. In terms of biological role, oligomerizes in the host endoplasmic reticulum into predominantly trimers. In a second time, gp160 transits in the host Golgi, where glycosylation is completed. The precursor is then proteolytically cleaved in the trans-Golgi and thereby activated by cellular furin or furin-like proteases to produce gp120 and gp41. Its function is as follows. Attaches the virus to the host lymphoid cell by binding to the primary receptor CD4. This interaction induces a structural rearrangement creating a high affinity binding site for a chemokine coreceptor like CXCR4 and/or CCR5. Acts as a ligand for CD209/DC-SIGN and CLEC4M/DC-SIGNR, which are respectively found on dendritic cells (DCs), and on endothelial cells of liver sinusoids and lymph node sinuses. These interactions allow capture of viral particles at mucosal surfaces by these cells and subsequent transmission to permissive cells. HIV subverts the migration properties of dendritic cells to gain access to CD4+ T-cells in lymph nodes. Virus transmission to permissive T-cells occurs either in trans (without DCs infection, through viral capture and transmission), or in cis (following DCs productive infection, through the usual CD4-gp120 interaction), thereby inducing a robust infection. In trans infection, bound virions remain infectious over days and it is proposed that they are not degraded, but protected in non-lysosomal acidic organelles within the DCs close to the cell membrane thus contributing to the viral infectious potential during DCs' migration from the periphery to the lymphoid tissues. On arrival at lymphoid tissues, intact virions recycle back to DCs' cell surface allowing virus transmission to CD4+ T-cells. Functionally, acts as a class I viral fusion protein. Under the current model, the protein has at least 3 conformational states: pre-fusion native state, pre-hairpin intermediate state, and post-fusion hairpin state. During fusion of viral and target intracellular membranes, the coiled coil regions (heptad repeats) assume a trimer-of-hairpins structure, positioning the fusion peptide in close proximity to the C-terminal region of the ectodomain. The formation of this structure appears to drive apposition and subsequent fusion of viral and target cell membranes. Complete fusion occurs in host cell endosomes and is dynamin-dependent, however some lipid transfer might occur at the plasma membrane. The virus undergoes clathrin-dependent internalization long before endosomal fusion, thus minimizing the surface exposure of conserved viral epitopes during fusion and reducing the efficacy of inhibitors targeting these epitopes. Membranes fusion leads to delivery of the nucleocapsid into the cytoplasm. This is Envelope glycoprotein gp160 from Human immunodeficiency virus type 1 group O (isolate ANT70) (HIV-1).